The sequence spans 357 residues: (4E)-oxalomesaconate Delta-isomerase (357 aa).

This sequence belongs to the PrpF family.

It catalyses the reaction (1E)-4-oxobut-1-ene-1,2,4-tricarboxylate = (3Z)-2-oxo-4-carboxy-3-hexenedioate. The protein operates within secondary metabolite metabolism; lignin degradation. In terms of biological role, contributes to the degradation of lignin at the level of the protocatechuate 4,5-cleavage pathway. Catalyzes the isomerization of the double bond between C4 and C5 in (4E)-oxalomesaconate (OMA) to (3Z)-2-keto-4-carboxy-3-hexenedioate (KCH), where the double bond has migrated between C3 and C4 via a 1,3-allylic isomerization. The protein is (4E)-oxalomesaconate Delta-isomerase of Novosphingobium sp. (strain KA1) (Sphingomonas sp. (strain KA1)).